We begin with the raw amino-acid sequence, 263 residues long: LIM and SH3 domain protein 1 (263 aa).

Residue methionine 1 is modified to N-acetylmethionine. The LIM zinc-binding domain occupies 5–56 (CARCGKIVYPTEKVNCLDKYWHKACFHCETCKMTLNMKNYKGYEKKPYCNAH). Position 42 is an N6-acetyllysine (lysine 42). Nebulin repeat units lie at residues 61–95 (SFTM…KNKG) and 97–131 (GFSV…KSRM). Residue threonine 68 is modified to Phosphothreonine. Lysine 75 is subject to N6-methyllysine. Serine 99 is modified (phosphoserine). Phosphothreonine is present on threonine 104. Lysine 112 carries the N6-succinyllysine modification. A phosphoserine mark is found at serine 118 and serine 134. Positions 123 to 207 (HEEFEKSRMG…QRSAPGGGGK (85 aa)) are disordered. A compositionally biased stretch (polar residues) spans 148–162 (DSSSYRRPTEQQQPQ). A Phosphothreonine; by PKA modification is found at threonine 156. Residues 204–263 (GGGKRYRAVYDYSAADEDEVSFQDGDTIVNVQQIDDGWMYGTVERTGDTGMLPANYVEAI) form the SH3 domain.

As to quaternary structure, interacts with F-actin. Interacts with KBTBD10. Interacts with ANKRD54.

It localises to the cytoplasm. Its subcellular location is the cell cortex. It is found in the cytoskeleton. In terms of biological role, plays an important role in the regulation of dynamic actin-based, cytoskeletal activities. Agonist-dependent changes in LASP1 phosphorylation may also serve to regulate actin-associated ion transport activities, not only in the parietal cell but also in certain other F-actin-rich secretory epithelial cell types. The polypeptide is LIM and SH3 domain protein 1 (Lasp1) (Mus musculus (Mouse)).